A 108-amino-acid chain; its full sequence is uncharacterized protein (108 aa).

The interval 75 to 94 (TPQVSSFPSSTTSLSHSCTT) is disordered. Low complexity predominate over residues 79–94 (SSFPSSTTSLSHSCTT).

This is an uncharacterized protein from Homo sapiens (Human).